We begin with the raw amino-acid sequence, 144 residues long: Catabolic 3-dehydroquinase (144 aa).

Catalysis depends on Tyr24, which acts as the Proton acceptor. Substrate contacts are provided by Asn76, His82, and Asp89. The active-site Proton donor is the His102. Residues 103–104 and Arg113 each bind substrate; that span reads IT.

Belongs to the type-II 3-dehydroquinase family. As to quaternary structure, homododecamer. Adopts a ring-like structure, composed of an arrangement of two hexameric rings stacked on top of one another.

It carries out the reaction 3-dehydroquinate = 3-dehydroshikimate + H2O. The protein operates within aromatic compound metabolism; 3,4-dihydroxybenzoate biosynthesis; 3,4-dihydroxybenzoate from 3-dehydroquinate: step 1/2. Is involved in the catabolism of quinate. Allows the utilization of quinate as carbon source via the beta-ketoadipate pathway. This is Catabolic 3-dehydroquinase from Debaryomyces hansenii (strain ATCC 36239 / CBS 767 / BCRC 21394 / JCM 1990 / NBRC 0083 / IGC 2968) (Yeast).